Consider the following 332-residue polypeptide: PRKC apoptosis WT1 regulator protein (332 aa).

Composition is skewed to polar residues over residues 1–14 and 52–62; these read MATG…STTD and AQTTAAGTSEL. The tract at residues 1–253 is disordered; sequence MATGGYRSSG…HNRDTSAPAN (253 aa). Positions 61 to 65 match the B30.2/SPRY domain-binding motif motif; the sequence is ELNHG. The span at 65 to 79 shows a compositional bias: low complexity; the sequence is GPAGAAAPAAPGPGA. A Nuclear localization signal motif is present at residues 137–153; that stretch reads RKGKGQIEKRKLREKRR. A selective for apoptosis induction in cancer cells (SAC) region spans residues 137–195; it reads RKGKGQIEKRKLREKRRSTGVVNIPAAECLDEYEDDEAGQKERKREDAITQQNTIQNEA. Thr155 carries the post-translational modification Phosphothreonine; by PKA. Positions 174 to 184 are enriched in basic and acidic residues; it reads AGQKERKREDA. Positions 176–198 form a coiled coil; sequence QKERKREDAITQQNTIQNEAASL. A compositionally biased stretch (polar residues) spans 185-195; the sequence is ITQQNTIQNEA. Ser223 carries the phosphoserine modification. Residues 234 to 247 are compositionally biased toward basic and acidic residues; sequence PRTDRSGFSRHNRD. The interval 292–332 is leucine-zipper; sequence IGKLKEEIDLLNRDLDDMEDENEQLKQENKTLLKVVGQLTR.

Homooligomer. Interacts (via the C-terminal region) with WT1. Interacts with THAP1. Interacts with AATF. Interacts with BACE1. Interacts with SPSB1 (via B30.2/SPRY domain); this interaction is direct and occurs in association with the Elongin BC complex. Interacts with SPSB2 (via B30.2/SPRY domain); this interaction occurs in association with the Elongin BC complex. Interacts with SPSB4 (via B30.2/SPRY domain); this interaction occurs in association with the Elongin BC complex. Component of a ternary complex composed of SQSTM1 and PRKCZ. Interacts with actin. In terms of processing, preferentially phosphorylated at the Thr-155 by PKC in cancer cells.

It is found in the cytoplasm. Its subcellular location is the nucleus. Its function is as follows. Pro-apoptotic protein capable of selectively inducing apoptosis in cancer cells, sensitizing the cells to diverse apoptotic stimuli and causing regression of tumors in animal models. Induces apoptosis in certain cancer cells by activation of the Fas prodeath pathway and coparallel inhibition of NF-kappa-B transcriptional activity. Inhibits the transcriptional activation and augments the transcriptional repression mediated by WT1. Down-regulates the anti-apoptotic protein BCL2 via its interaction with WT1. Also seems to be a transcriptional repressor by itself. May be directly involved in regulating the amyloid precursor protein (APP) cleavage activity of BACE1. The polypeptide is PRKC apoptosis WT1 regulator protein (Pawr) (Rattus norvegicus (Rat)).